The primary structure comprises 720 residues: Catalase-peroxidase (720 aa).

The tryptophyl-tyrosyl-methioninium (Trp-Tyr) (with M-233) cross-link spans 82–207 (WHSAGTYRTF…LGNTVMGLIY (126 aa)). Residue histidine 83 is the Proton acceptor of the active site. The segment at residues 207 to 233 (YVNPEGPNGEPDLEGSAKNIRESFGKM) is a cross-link (tryptophyl-tyrosyl-methioninium (Tyr-Met) (with W-82)). Histidine 248 contacts heme b.

It belongs to the peroxidase family. Peroxidase/catalase subfamily. Homodimer or homotetramer. Heme b is required as a cofactor. Post-translationally, formation of the three residue Trp-Tyr-Met cross-link is important for the catalase, but not the peroxidase activity of the enzyme.

The catalysed reaction is H2O2 + AH2 = A + 2 H2O. It catalyses the reaction 2 H2O2 = O2 + 2 H2O. Functionally, bifunctional enzyme with both catalase and broad-spectrum peroxidase activity. The sequence is that of Catalase-peroxidase from Halobacterium salinarum (strain ATCC 29341 / DSM 671 / R1).